A 98-amino-acid chain; its full sequence is PqqA binding protein (98 aa).

It belongs to the PqqD family. In terms of assembly, monomer. Interacts with PqqE.

Its pathway is cofactor biosynthesis; pyrroloquinoline quinone biosynthesis. Functions as a PqqA binding protein and presents PqqA to PqqE, in the pyrroloquinoline quinone (PQQ) biosynthetic pathway. The protein is PqqA binding protein of Pseudomonas syringae pv. tomato (strain ATCC BAA-871 / DC3000).